Consider the following 383-residue polypeptide: Heme A synthase (383 aa).

The next 8 helical transmembrane spans lie at 38-58 (VRVW…VGGL), 127-147 (VIGL…KIPP), 153-173 (LFLL…MVAS), 187-207 (LATH…YIMV), 230-250 (ANWL…VAGI), 287-307 (LVQF…LYVW), 321-341 (AFDW…VTVL), and 344-364 (APWT…CLIL). A heme-binding site is contributed by H292. H352 serves as a coordination point for heme.

Belongs to the COX15/CtaA family. Type 2 subfamily. In terms of assembly, interacts with CtaB. Heme b serves as cofactor.

Its subcellular location is the cell membrane. The enzyme catalyses Fe(II)-heme o + 2 A + H2O = Fe(II)-heme a + 2 AH2. It functions in the pathway porphyrin-containing compound metabolism; heme A biosynthesis; heme A from heme O: step 1/1. Catalyzes the conversion of heme O to heme A by two successive hydroxylations of the methyl group at C8. The first hydroxylation forms heme I, the second hydroxylation results in an unstable dihydroxymethyl group, which spontaneously dehydrates, resulting in the formyl group of heme A. The polypeptide is Heme A synthase (Dinoroseobacter shibae (strain DSM 16493 / NCIMB 14021 / DFL 12)).